A 266-amino-acid polypeptide reads, in one-letter code: GTP cyclohydrolase III (266 aa).

The protein belongs to the archaeal-type GTP cyclohydrolase family.

It catalyses the reaction GTP + 3 H2O = 2-amino-5-formylamino-6-(5-phospho-D-ribosylamino)pyrimidin-4(3H)-one + 2 phosphate + 2 H(+). Its function is as follows. Catalyzes the formation of 2-amino-5-formylamino-6-ribofuranosylamino-4(3H)-pyrimidinone ribonucleotide monophosphate and inorganic phosphate from GTP. Also has an independent pyrophosphate phosphohydrolase activity. This Methanococcus maripaludis (strain DSM 14266 / JCM 13030 / NBRC 101832 / S2 / LL) protein is GTP cyclohydrolase III.